The primary structure comprises 87 residues: U14-lycotoxin-Ls1b (87 aa).

The first 20 residues, 1–20, serve as a signal peptide directing secretion; it reads MNSKVFVVLLLLALSTCVLS. The WAP domain maps to 21-66; that stretch reads EKYCPTPRNTSCKKMNIRNNCCRDSDCTSNAFCCAEPCGNFCHKAS. Disulfide bonds link Cys-24–Cys-54, Cys-32–Cys-58, Cys-41–Cys-53, Cys-42–Cys-80, and Cys-47–Cys-62.

The protein belongs to the venom protein 11 family. 01 (wap-1) subfamily. Post-translationally, contains 5 disulfide bonds. In terms of tissue distribution, expressed by the venom gland.

It is found in the secreted. Functionally, has antibacterial activity. This Lycosa singoriensis (Wolf spider) protein is U14-lycotoxin-Ls1b.